The chain runs to 201 residues: Cold shock domain-containing protein 4 (201 aa).

An N-acetylserine modification is found at serine 2. A CSD domain is found at 14–81; that stretch reads RRKGTVKWFD…RPKAIEVSGP (68 aa). The disordered stretch occupies residues 66–109; the sequence is EVDNSGRPKAIEVSGPDGAPVQGNSGGGGSSGGRGGFGGGGGRG. Gly residues predominate over residues 89 to 109; the sequence is NSGGGGSSGGRGGFGGGGGRG. 2 CCHC-type zinc fingers span residues 136–153 and 180–197; these read NSCF…ECSQ and LSCY…DCTS.

The protein belongs to the cold shock protein (CSP) family. In terms of tissue distribution, mostly expressed in shoot apices and siliques, and, to a lower extent, in roots, cotyledons, stems, shoots, leaves, floral buds and flowers. Present in shoot apical meristems and siliques (at protein level). Very low levels are observed in cv. Landsberg erecta compared to cv. Columbia.

The protein resides in the cytoplasm. The protein localises to the nucleus. It localises to the nucleolus. In terms of biological role, chaperone that binds to and unwinds RNA and both single-stranded DNA and double-stranded DNA (ssDNA and dsDNA DNA). Regulates the flowering transition and flower and seed development, particularly at late stages of embryo development, through regulation of gene expression (including MEA, FIS2, AP1, CAL, AG and SHP2). The polypeptide is Cold shock domain-containing protein 4 (CSP4) (Arabidopsis thaliana (Mouse-ear cress)).